Here is a 205-residue protein sequence, read N- to C-terminus: UPF0316 protein Cthe_2213 (205 aa).

3 consecutive transmembrane segments (helical) span residues 15–37 (LPLL…IIFV), 44–64 (LAPV…SQIM), and 70–90 (FVCY…GIII).

This sequence belongs to the UPF0316 family.

Its subcellular location is the cell membrane. This chain is UPF0316 protein Cthe_2213, found in Acetivibrio thermocellus (strain ATCC 27405 / DSM 1237 / JCM 9322 / NBRC 103400 / NCIMB 10682 / NRRL B-4536 / VPI 7372) (Clostridium thermocellum).